We begin with the raw amino-acid sequence, 201 residues long: 8-oxoguanine DNA glycosylase/AP lyase (201 aa).

Residues K126 and D144 contribute to the active site.

Belongs to the type-2 OGG1 family.

The enzyme catalyses 2'-deoxyribonucleotide-(2'-deoxyribose 5'-phosphate)-2'-deoxyribonucleotide-DNA = a 3'-end 2'-deoxyribonucleotide-(2,3-dehydro-2,3-deoxyribose 5'-phosphate)-DNA + a 5'-end 5'-phospho-2'-deoxyribonucleoside-DNA + H(+). Catalyzes the excision of an oxidatively damaged form of guanine (7,8-dihydro-8-oxoguanine = 8-oxoG) from DNA. Also cleaves the DNA backbone at apurinic/apyrimidinic sites (AP sites). The sequence is that of 8-oxoguanine DNA glycosylase/AP lyase from Metallosphaera sedula (strain ATCC 51363 / DSM 5348 / JCM 9185 / NBRC 15509 / TH2).